The sequence spans 90 residues: U7-theraphotoxin-Hhn1a 4 (90 aa).

Positions 1 to 19 (MKTAIFTVVLALAVFAVLS) are cleaved as a signal peptide. Residues 20–50 (FGWEANEEALSEEFTELIHEKEAASETEARE) constitute a propeptide that is removed on maturation. Cystine bridges form between C51–C65, C58–C70, and C64–C81.

Belongs to the neurotoxin 10 (Hwtx-1) family. 13 (Hntx-13) subfamily. Expressed by the venom gland.

The protein resides in the secreted. In terms of biological role, ion channel inhibitor. The sequence is that of U7-theraphotoxin-Hhn1a 4 from Cyriopagopus hainanus (Chinese bird spider).